Here is a 164-residue protein sequence, read N- to C-terminus: uncharacterized protein (164 aa).

The protein localises to the mitochondrion. This is an uncharacterized protein from Arabidopsis thaliana (Mouse-ear cress).